A 234-amino-acid polypeptide reads, in one-letter code: ATP-dependent dethiobiotin synthetase BioD (234 aa).

12 to 17 (DVGKTI) contacts ATP. A Mg(2+)-binding site is contributed by T16. The active site involves K37. T41 is a binding site for substrate. Residues D54 and 115-118 (EGAG) each bind ATP. Positions 54 and 115 each coordinate Mg(2+).

This sequence belongs to the dethiobiotin synthetase family. Homodimer. Requires Mg(2+) as cofactor.

It is found in the cytoplasm. The catalysed reaction is (7R,8S)-7,8-diammoniononanoate + CO2 + ATP = (4R,5S)-dethiobiotin + ADP + phosphate + 3 H(+). It functions in the pathway cofactor biosynthesis; biotin biosynthesis; biotin from 7,8-diaminononanoate: step 1/2. Catalyzes a mechanistically unusual reaction, the ATP-dependent insertion of CO2 between the N7 and N8 nitrogen atoms of 7,8-diaminopelargonic acid (DAPA, also called 7,8-diammoniononanoate) to form a ureido ring. In Lysinibacillus sphaericus (strain C3-41), this protein is ATP-dependent dethiobiotin synthetase BioD.